Reading from the N-terminus, the 248-residue chain is MLSILFIFGLILGSFYYTAGCRIPLHLSIIAPRSSCPFCRRTLTPAELIPILSFLFQKGKCKSCGHRISFMYPAAELVTACLFAAAGIRFGISLELFPAVVFISLLIIVAVTDIHFMLIPNRILIFFLPFLAAARLISPLDSWYAGLLGAAAGFLFLAVIAAITHGGVGGGDIKLFAVIGFVLGVKMLAAAFFFSVLIGALYGAAAVLTGRLAKRQPLPFAPAIAAGSILAYLYGDSIISFYIKMALG.

Residues 1–21 (MLSILFIFGLILGSFYYTAGC) traverse the membrane as a helical segment. The Zn(2+) site is built by Cys36, Cys39, Cys61, and Cys64. 6 consecutive transmembrane segments (helical) span residues 68–88 (ISFMYPAAELVTACLFAAAGI), 90–110 (FGISLELFPAVVFISLLIIVA), 114–134 (IHFMLIPNRILIFFLPFLAAA), 143–163 (WYAGLLGAAAGFLFLAVIAAI), 178–198 (VIGFVLGVKMLAAAFFFSVLI), and 223–243 (AIAAGSILAYLYGDSIISFYI).

It belongs to the peptidase A24 family. The cofactor is Zn(2+).

Its subcellular location is the cell membrane. The catalysed reaction is Typically cleaves a -Gly-|-Phe- bond to release an N-terminal, basic peptide of 5-8 residues from type IV prepilin, and then N-methylates the new N-terminal amino group, the methyl donor being S-adenosyl-L-methionine.. Its function is as follows. Plays a role in type II pseudopili formation by proteolytically removing the leader sequence from substrate proteins and subsequently monomethylating the alpha-amino group of the newly exposed N-terminal phenylalanine. Substrates include proteins required for biogenesis of the type II general secretory apparatus. In Bacillus subtilis (strain 168), this protein is Prepilin leader peptidase/N-methyltransferase (comC).